Reading from the N-terminus, the 121-residue chain is Putative membrane protein insertion efficiency factor (121 aa).

The segment at 97 to 121 (VPARRDRHAGGRRCCPANVDEQRST) is disordered.

Belongs to the UPF0161 family.

The protein resides in the cell membrane. Could be involved in insertion of integral membrane proteins into the membrane. This Rhodococcus jostii (strain RHA1) protein is Putative membrane protein insertion efficiency factor.